The chain runs to 343 residues: DNA repair and recombination protein RadA (343 aa).

Residue 107 to 114 participates in ATP binding; it reads GEFGAGKS.

The protein belongs to the eukaryotic RecA-like protein family.

Functionally, involved in DNA repair and in homologous recombination. Binds and assemble on single-stranded DNA to form a nucleoprotein filament. Hydrolyzes ATP in a ssDNA-dependent manner and promotes DNA strand exchange between homologous DNA molecules. The polypeptide is DNA repair and recombination protein RadA (Halobacterium salinarum (strain ATCC 29341 / DSM 671 / R1)).